The sequence spans 428 residues: Adenylosuccinate synthetase (428 aa).

Residues 12–18 (GDEGKGK) and 40–42 (GHT) each bind GTP. The active-site Proton acceptor is the aspartate 13. Positions 13 and 40 each coordinate Mg(2+). IMP is bound by residues 13 to 16 (DEGK), 38 to 41 (NAGH), threonine 130, arginine 144, glutamine 225, threonine 240, and arginine 304. Histidine 41 (proton donor) is an active-site residue. 300-306 (ATTGRPR) lines the substrate pocket. GTP-binding positions include arginine 306, 332-334 (KLD), and 415-417 (SVG).

It belongs to the adenylosuccinate synthetase family. As to quaternary structure, homodimer. Mg(2+) serves as cofactor.

It is found in the cytoplasm. The enzyme catalyses IMP + L-aspartate + GTP = N(6)-(1,2-dicarboxyethyl)-AMP + GDP + phosphate + 2 H(+). It functions in the pathway purine metabolism; AMP biosynthesis via de novo pathway; AMP from IMP: step 1/2. Plays an important role in the de novo pathway of purine nucleotide biosynthesis. Catalyzes the first committed step in the biosynthesis of AMP from IMP. This chain is Adenylosuccinate synthetase, found in Lawsonia intracellularis (strain PHE/MN1-00).